The primary structure comprises 880 residues: DNA gyrase subunit A (880 aa).

The Topo IIA-type catalytic domain maps to Leu35–Leu530. The active-site O-(5'-phospho-DNA)-tyrosine intermediate is the Tyr123. The short motif at Gln557 to Gly563 is the GyrA-box element.

This sequence belongs to the type II topoisomerase GyrA/ParC subunit family. Heterotetramer, composed of two GyrA and two GyrB chains. In the heterotetramer, GyrA contains the active site tyrosine that forms a transient covalent intermediate with DNA, while GyrB binds cofactors and catalyzes ATP hydrolysis.

The protein resides in the cytoplasm. The enzyme catalyses ATP-dependent breakage, passage and rejoining of double-stranded DNA.. Functionally, a type II topoisomerase that negatively supercoils closed circular double-stranded (ds) DNA in an ATP-dependent manner to modulate DNA topology and maintain chromosomes in an underwound state. Negative supercoiling favors strand separation, and DNA replication, transcription, recombination and repair, all of which involve strand separation. Also able to catalyze the interconversion of other topological isomers of dsDNA rings, including catenanes and knotted rings. Type II topoisomerases break and join 2 DNA strands simultaneously in an ATP-dependent manner. The protein is DNA gyrase subunit A of Haemophilus influenzae (strain ATCC 51907 / DSM 11121 / KW20 / Rd).